The primary structure comprises 548 residues: Glucose-6-phosphate isomerase (548 aa).

The active-site Proton donor is the Glu-355. Residues His-386 and Lys-514 contribute to the active site.

Belongs to the GPI family.

It localises to the cytoplasm. The enzyme catalyses alpha-D-glucose 6-phosphate = beta-D-fructose 6-phosphate. It functions in the pathway carbohydrate biosynthesis; gluconeogenesis. The protein operates within carbohydrate degradation; glycolysis; D-glyceraldehyde 3-phosphate and glycerone phosphate from D-glucose: step 2/4. Functionally, catalyzes the reversible isomerization of glucose-6-phosphate to fructose-6-phosphate. The chain is Glucose-6-phosphate isomerase from Hamiltonella defensa subsp. Acyrthosiphon pisum (strain 5AT).